A 153-amino-acid polypeptide reads, in one-letter code: NAD(P)H-quinone oxidoreductase subunit N (153 aa).

This sequence belongs to the complex I NdhN subunit family. In terms of assembly, NDH-1 can be composed of about 15 different subunits; different subcomplexes with different compositions have been identified which probably have different functions.

The protein localises to the cellular thylakoid membrane. The enzyme catalyses a plastoquinone + NADH + (n+1) H(+)(in) = a plastoquinol + NAD(+) + n H(+)(out). It catalyses the reaction a plastoquinone + NADPH + (n+1) H(+)(in) = a plastoquinol + NADP(+) + n H(+)(out). NDH-1 shuttles electrons from an unknown electron donor, via FMN and iron-sulfur (Fe-S) centers, to quinones in the respiratory and/or the photosynthetic chain. The immediate electron acceptor for the enzyme in this species is believed to be plastoquinone. Couples the redox reaction to proton translocation, and thus conserves the redox energy in a proton gradient. Cyanobacterial NDH-1 also plays a role in inorganic carbon-concentration. This chain is NAD(P)H-quinone oxidoreductase subunit N, found in Prochlorococcus marinus (strain MIT 9313).